The following is a 29-amino-acid chain: Protein YldA (29 aa).

A helical transmembrane segment spans residues F5 to L25.

The protein localises to the cell inner membrane. The sequence is that of Protein YldA from Escherichia coli (strain K12).